A 475-amino-acid polypeptide reads, in one-letter code: Aspartic proteinase 39 (475 aa).

Residues 1–23 form the signal peptide; it reads MELRRKLCIVVAVFVIVIEFASA. The region spanning 74–422 is the Peptidase A1 domain; the sequence is YFTKIKLGSP…DLDNEVIGWA (349 aa). Residue Asp92 is part of the active site. Residues Asn124 and Asn222 are each glycosylated (N-linked (GlcNAc...) asparagine). Asp303 is an active-site residue. 2 N-linked (GlcNAc...) asparagine glycosylation sites follow: Asn425 and Asn446. A lipid anchor (GPI-anchor amidated serine) is attached at Ser449. Positions 450–475 are cleaved as a propeptide — removed in mature form; sequence APRLLMITKLLTILSPLIVMAFTSLA.

Belongs to the peptidase A1 family. As to expression, highly expressed in pollen and pollen tubes. Mostly expressed in inflorescence, flowers and siliques, and barely in leaves and seedlings.

It is found in the cell membrane. It localises to the cytoplasm. The protein resides in the cytosol. Functionally, displays aspartic proteolytic activity. Together with A36, contributes to pollen and ovule development, including the apical cell wall constitution of the growing pollen tubes. The sequence is that of Aspartic proteinase 39 from Arabidopsis thaliana (Mouse-ear cress).